A 609-amino-acid polypeptide reads, in one-letter code: Adagio protein 1 (609 aa).

Positions methionine 1–leucine 17 are enriched in low complexity. Residues methionine 1 to glycine 24 are disordered. The PAS domain maps to isoleucine 32 to glycine 114. Position 82 is an S-4a-FMN cysteine (cysteine 82). In terms of domain architecture, PAC spans glutamine 118–isoleucine 161. The 47-residue stretch at cysteine 195–valine 241 folds into the F-box domain. 5 Kelch repeats span residues serine 292 to proline 342, arginine 345 to alanine 392, arginine 397 to tryptophan 445, arginine 450 to glycine 501, and arginine 516 to glycine 564.

The protein belongs to the ADAGIO family. Interacts with NFXL2. Interacts (via N-terminus) with GI and (via Kelch repeats) with ADO3. Component of an E3 ubiquitin ligase SCF(ADO1) complex composed of SKP1A/ASK1 (or SKP1B/ASK2), CUL1, RBX1 and ADO1. Also interacts with SKP1D/ASK4, SKP1K/ASK11, CRY1, PHYB, APRR1 and APRR5, and probably with SKP1N/ASK14 and SKP1S/ASK19. In terms of processing, may be ubiquitinated. Degraded in a proteasome-dependent manner. Post-translationally, FMN binds covalently to cysteine after exposure to blue light and is reversed in the dark. In terms of tissue distribution, ubiquitously expressed with higher levels in cotyledons and leaves.

The protein localises to the nucleus. It localises to the cytoplasm. The protein operates within protein modification; protein ubiquitination. Component of an E3 ubiquitin ligase complex that plays a central role in blue light-dependent circadian cycles. Acts as a blue light photoreceptor, due to the presence of FMN, that mediates light-regulated protein degradation of critical clock components by targeting them to the proteasome complex. The SCF(ADO1) E3 ubiquitin ligase complex is involved in the regulation of circadian clock-dependent processes including the transition to flowering time, hypocotyl elongation, cotyledons and leaf movement rhythms. APRR1/TOC1 and APRR5, but not 'GIGANTEA', are proteolytic substrates of this ubiquitin ligase complex. Blue light enhances cooperative stabilization of 'GIGANTEA' and ADO1/ZTL, leading to amplification and sharpening of the expression profile of APRR1/TOC1. ADO1/ZTL interacts with ADO3, preventing the interaction of ADO3 with CDF1. The sequence is that of Adagio protein 1 (ADO1) from Arabidopsis thaliana (Mouse-ear cress).